Here is a 595-residue protein sequence, read N- to C-terminus: Quinoprotein alcohol dehydrogenase PedH (595 aa).

Residues 1 to 27 (MTRSPRRPLFAVSLVLSAMLLAGAAHA) form the signal peptide. Residue Gln-87 participates in pyrroloquinoline quinone binding. Cys-131 and Cys-132 are joined by a disulfide. Pyrroloquinoline quinone-binding residues include Arg-137, Ser-181, Gly-197, and Gly-198. Residue Glu-199 participates in Pr(3+) binding. Trp-263 serves as a coordination point for pyrroloquinoline quinone. Pr(3+) contacts are provided by Asn-281, Asp-323, and Asp-325. Asp-323 functions as the Proton acceptor in the catalytic mechanism. Residues Arg-350, Asn-417, Trp-493, and Ala-557 each contribute to the pyrroloquinoline quinone site.

Belongs to the bacterial PQQ dehydrogenase family. It depends on Pr(3+) as a cofactor. Requires Nd(3+) as cofactor. La(3+) serves as cofactor. Ce(3+) is required as a cofactor. The cofactor is Sm(3+). It depends on pyrroloquinoline quinone as a cofactor. Post-translationally, the disulfide ring formed between the two adjacent cysteine residues Cys-131 and Cys-132 is essential for efficient electron transfer at pH 7 from PedH to its natural electron acceptor cytochrome c550.

Its subcellular location is the periplasm. The catalysed reaction is a primary alcohol + 2 Fe(III)-[cytochrome c] = an aldehyde + 2 Fe(II)-[cytochrome c] + 2 H(+). It carries out the reaction ethanol + 2 Fe(III)-[cytochrome c] = acetaldehyde + 2 Fe(II)-[cytochrome c] + 2 H(+). The enzyme catalyses butan-1-ol + 2 Fe(III)-[cytochrome c] = butanal + 2 Fe(II)-[cytochrome c] + 2 H(+). It catalyses the reaction butan-2-ol + 2 Fe(III)-[cytochrome c] = butan-2-one + 2 Fe(II)-[cytochrome c] + 2 H(+). The catalysed reaction is 2-phenylethanol + 2 Fe(III)-[cytochrome c] = 2-phenylacetaldehyde + 2 Fe(II)-[cytochrome c] + 2 H(+). It carries out the reaction octan-1-ol + 2 Fe(III)-[cytochrome c] = octanal + 2 Fe(II)-[cytochrome c] + 2 H(+). The enzyme catalyses hexan-1-ol + 2 Fe(III)-[cytochrome c] = hexanal + 2 Fe(II)-[cytochrome c] + 2 H(+). It catalyses the reaction cinnamyl alcohol + 2 Fe(III)-[cytochrome c] = cinnamaldehyde + 2 Fe(II)-[cytochrome c] + 2 H(+). The catalysed reaction is farnesol + 2 Fe(III)-[cytochrome c] = farnesal + 2 Fe(II)-[cytochrome c] + 2 H(+). It carries out the reaction an aldehyde + 2 Fe(III)-[cytochrome c] + H2O = a carboxylate + 2 Fe(II)-[cytochrome c] + 3 H(+). The enzyme catalyses acetaldehyde + 2 Fe(III)-[cytochrome c] + H2O = 2 Fe(II)-[cytochrome c] + acetate + 3 H(+). It catalyses the reaction butanal + 2 Fe(III)-[cytochrome c] + H2O = butanoate + 2 Fe(II)-[cytochrome c] + 3 H(+). The catalysed reaction is hexanal + 2 Fe(III)-[cytochrome c] + H2O = hexanoate + 2 Fe(II)-[cytochrome c] + 3 H(+). It carries out the reaction octanal + 2 Fe(III)-[cytochrome c] + H2O = octanoate + 2 Fe(II)-[cytochrome c] + 3 H(+). Functionally, alcohol dehydrogenase that catalyzes the oxidation of a range of substrates, including linear and aromatic primary and secondary alcohols, as well as aldehydes, but only in the presence of lanthanides, allowing bacterial growth with a variety of volatile organic compounds (VOCs) as carbon and energy sources. Is also involved in the transcriptional regulation of pedE and pedH, most likely acting as a lanthanide sensory module. Uses a specific inducible cytochrome c550, encoded by the adjacent gene in the locus, as electron acceptor. This is Quinoprotein alcohol dehydrogenase PedH from Pseudomonas putida (strain ATCC 47054 / DSM 6125 / CFBP 8728 / NCIMB 11950 / KT2440).